The following is a 337-amino-acid chain: Geranylgeranyl pyrophosphate synthase subD (337 aa).

Isopentenyl diphosphate contacts are provided by lysine 53, arginine 56, and histidine 85. Residues aspartate 92 and aspartate 96 each contribute to the Mg(2+) site. Position 101 (arginine 101) interacts with dimethylallyl diphosphate. Arginine 102 contributes to the isopentenyl diphosphate binding site. Lysine 179, threonine 180, and glutamine 219 together coordinate dimethylallyl diphosphate. Aspartate 222 is a binding site for Mg(2+). Asparagine 226, lysine 236, and lysine 246 together coordinate dimethylallyl diphosphate.

The protein belongs to the FPP/GGPP synthase family. Mg(2+) is required as a cofactor.

It catalyses the reaction isopentenyl diphosphate + dimethylallyl diphosphate = (2E)-geranyl diphosphate + diphosphate. It carries out the reaction isopentenyl diphosphate + (2E)-geranyl diphosphate = (2E,6E)-farnesyl diphosphate + diphosphate. The catalysed reaction is isopentenyl diphosphate + (2E,6E)-farnesyl diphosphate = (2E,6E,10E)-geranylgeranyl diphosphate + diphosphate. Its pathway is secondary metabolite biosynthesis; terpenoid biosynthesis. In terms of biological role, geranylgeranyl pyrophosphate synthase; part of the gene cluster that mediates the biosynthesis of the immunosuppressants subglutinols, meroterpenoids consisting of an alpha-pyrone (4-hydroxy-5,6-dimethyl-2-pyrone) moiety attached to a decalin core fused to a five-membered cyclic ether carrying a prenylside chain. The first step of the pathway is the synthesis of the alpha-pyrone moiety by the polyketide synthase subA via condensation of one acetyl-CoA starter unit with 3 malonyl-CoA units and 2 methylations. The alpha-pyrone is then combined with geranylgeranyl pyrophosphate (GGPP) formed by the GGPP synthase subD through the action of the prenyltransferase subC to yield a linear alpha-pyrone diterpenoid. Subsequent steps in the subglutinol biosynthetic pathway involve the decalin core formation, which is thought to be initiated by the epoxidation of the C10-C11 olefin by the FAD-dependent oxidoreductase subE. The following cyclization cascade would be catalyzed by the terpene cyclase subB. Lastly, the FAD-dependent dehydrogenase subF probably catalyzes the five-membered cyclic ether formation to complete the formation of subglutinol A. Subsequent redox reactions appear to give rise to subglutinol C and D, however, it remains unclear which enzymes are responsible for these transformations. SubD may have secondary function in the conversion of the identified subglutinols to subglutinol analog 45, which seems to be the major product of the cluster. This is Geranylgeranyl pyrophosphate synthase subD from Metarhizium robertsii (strain ARSEF 23 / ATCC MYA-3075) (Metarhizium anisopliae (strain ARSEF 23)).